Reading from the N-terminus, the 341-residue chain is Phosphoribosylformylglycinamidine cyclo-ligase (341 aa).

The protein belongs to the AIR synthase family.

It localises to the cytoplasm. It catalyses the reaction 2-formamido-N(1)-(5-O-phospho-beta-D-ribosyl)acetamidine + ATP = 5-amino-1-(5-phospho-beta-D-ribosyl)imidazole + ADP + phosphate + H(+). It functions in the pathway purine metabolism; IMP biosynthesis via de novo pathway; 5-amino-1-(5-phospho-D-ribosyl)imidazole from N(2)-formyl-N(1)-(5-phospho-D-ribosyl)glycinamide: step 2/2. This is Phosphoribosylformylglycinamidine cyclo-ligase from Xanthomonas euvesicatoria pv. vesicatoria (strain 85-10) (Xanthomonas campestris pv. vesicatoria).